The sequence spans 210 residues: dITP/XTP pyrophosphatase (210 aa).

Residue 19–24 (SNNPGK) coordinates substrate. Residues D51 and D80 each coordinate Mg(2+). D80 (proton acceptor) is an active-site residue. Substrate-binding positions include S81, 166-169 (FGYD), K189, and 194-195 (HR).

The protein belongs to the HAM1 NTPase family. As to quaternary structure, homodimer. Mg(2+) serves as cofactor.

It catalyses the reaction XTP + H2O = XMP + diphosphate + H(+). The catalysed reaction is dITP + H2O = dIMP + diphosphate + H(+). It carries out the reaction ITP + H2O = IMP + diphosphate + H(+). Pyrophosphatase that catalyzes the hydrolysis of nucleoside triphosphates to their monophosphate derivatives, with a high preference for the non-canonical purine nucleotides XTP (xanthosine triphosphate), dITP (deoxyinosine triphosphate) and ITP. Seems to function as a house-cleaning enzyme that removes non-canonical purine nucleotides from the nucleotide pool, thus preventing their incorporation into DNA/RNA and avoiding chromosomal lesions. This is dITP/XTP pyrophosphatase from Burkholderia mallei (strain ATCC 23344).